The following is a 428-amino-acid chain: GTPase Obg (428 aa).

Residues 1-158 (MFVDQVKVYV…RDVILELKVL (158 aa)) form the Obg domain. A disordered region spans residues 118–145 (KGGRGGRGNSRFATPANPAPQLSENGEP). An OBG-type G domain is found at 159–329 (ADVGLVGFPS…LLFEIANQLE (171 aa)). Residues 165-172 (GFPSVGKS), 190-194 (FTTLV), 212-215 (DLPG), 282-285 (NKMD), and 310-312 (SAI) contribute to the GTP site. Mg(2+) contacts are provided by Ser172 and Thr192. The OCT domain maps to 350-428 (RFDEGDAPFE…LLEFEFEFID (79 aa)).

It belongs to the TRAFAC class OBG-HflX-like GTPase superfamily. OBG GTPase family. In terms of assembly, monomer. Mg(2+) serves as cofactor.

The protein resides in the cytoplasm. Its function is as follows. An essential GTPase which binds GTP, GDP and possibly (p)ppGpp with moderate affinity, with high nucleotide exchange rates and a fairly low GTP hydrolysis rate. Plays a role in control of the cell cycle, stress response, ribosome biogenesis and in those bacteria that undergo differentiation, in morphogenesis control. The chain is GTPase Obg from Bacillus pumilus (strain SAFR-032).